The sequence spans 310 residues: Tagatose-6-phosphate kinase (310 aa).

It belongs to the carbohydrate kinase PfkB family. LacC subfamily.

The enzyme catalyses D-tagatofuranose 6-phosphate + ATP = D-tagatofuranose 1,6-bisphosphate + ADP + H(+). Its pathway is carbohydrate metabolism; D-tagatose 6-phosphate degradation; D-glyceraldehyde 3-phosphate and glycerone phosphate from D-tagatose 6-phosphate: step 1/2. This chain is Tagatose-6-phosphate kinase, found in Staphylococcus epidermidis (strain ATCC 12228 / FDA PCI 1200).